Here is a 119-residue protein sequence, read N- to C-terminus: Protein TusC (119 aa).

The protein belongs to the DsrF/TusC family. As to quaternary structure, heterohexamer, formed by a dimer of trimers. The hexameric TusBCD complex contains 2 copies each of TusB, TusC and TusD. The TusBCD complex interacts with TusE.

The protein resides in the cytoplasm. Its function is as follows. Part of a sulfur-relay system required for 2-thiolation of 5-methylaminomethyl-2-thiouridine (mnm(5)s(2)U) at tRNA wobble positions. This Escherichia coli O127:H6 (strain E2348/69 / EPEC) protein is Protein TusC.